Reading from the N-terminus, the 229-residue chain is Enolase-phosphatase E1 (229 aa).

This sequence belongs to the HAD-like hydrolase superfamily. MasA/MtnC family. In terms of assembly, monomer. It depends on Mg(2+) as a cofactor.

The enzyme catalyses 5-methylsulfanyl-2,3-dioxopentyl phosphate + H2O = 1,2-dihydroxy-5-(methylsulfanyl)pent-1-en-3-one + phosphate. It functions in the pathway amino-acid biosynthesis; L-methionine biosynthesis via salvage pathway; L-methionine from S-methyl-5-thio-alpha-D-ribose 1-phosphate: step 3/6. It participates in amino-acid biosynthesis; L-methionine biosynthesis via salvage pathway; L-methionine from S-methyl-5-thio-alpha-D-ribose 1-phosphate: step 4/6. Its function is as follows. Bifunctional enzyme that catalyzes the enolization of 2,3-diketo-5-methylthiopentyl-1-phosphate (DK-MTP-1-P) into the intermediate 2-hydroxy-3-keto-5-methylthiopentenyl-1-phosphate (HK-MTPenyl-1-P), which is then dephosphorylated to form the acireductone 1,2-dihydroxy-3-keto-5-methylthiopentene (DHK-MTPene). In Yersinia pestis (strain Pestoides F), this protein is Enolase-phosphatase E1.